A 303-amino-acid chain; its full sequence is Ribosomal protein L11 methyltransferase (303 aa).

Residues T146, G167, D189, and N236 each coordinate S-adenosyl-L-methionine.

This sequence belongs to the methyltransferase superfamily. PrmA family.

The protein resides in the cytoplasm. It carries out the reaction L-lysyl-[protein] + 3 S-adenosyl-L-methionine = N(6),N(6),N(6)-trimethyl-L-lysyl-[protein] + 3 S-adenosyl-L-homocysteine + 3 H(+). In terms of biological role, methylates ribosomal protein L11. The chain is Ribosomal protein L11 methyltransferase from Acinetobacter baylyi (strain ATCC 33305 / BD413 / ADP1).